Reading from the N-terminus, the 194-residue chain is uncharacterized protein (194 aa).

2 consecutive CBS domains span residues 13-72 and 78-133; these read MSFP…PKDV and MSKK…LLEI. Positions 159–192 constitute an ACP-type MB domain; it reads YINGICENCGYQGRVRLYQGRYLCDECIEEFEEK. Fe cation contacts are provided by cysteine 164, cysteine 167, cysteine 182, and cysteine 185. Positions 164, 167, 182, and 185 each coordinate Zn(2+).

This is an uncharacterized protein from Methanocaldococcus jannaschii (strain ATCC 43067 / DSM 2661 / JAL-1 / JCM 10045 / NBRC 100440) (Methanococcus jannaschii).